The chain runs to 170 residues: Large ribosomal subunit protein uL5 (170 aa).

This sequence belongs to the universal ribosomal protein uL5 family. As to quaternary structure, part of the 50S ribosomal subunit; contacts the 5S rRNA and probably tRNA. Forms a bridge to the 30S subunit in the 70S ribosome.

Functionally, this is one of the proteins that bind and probably mediate the attachment of the 5S RNA into the large ribosomal subunit, where it forms part of the central protuberance. In the 70S ribosome it contacts protein S13 of the 30S subunit (bridge B1b), connecting the 2 subunits; this bridge is implicated in subunit movement. May contact the P site tRNA; the 5S rRNA and some of its associated proteins might help stabilize positioning of ribosome-bound tRNAs. This chain is Large ribosomal subunit protein uL5, found in Methanobrevibacter smithii (strain ATCC 35061 / DSM 861 / OCM 144 / PS).